The sequence spans 453 residues: Trigger factor (453 aa).

The PPIase FKBP-type domain maps to 171-256; it reads GDRVTVSFKG…ATLVEAPKDT (86 aa).

It belongs to the FKBP-type PPIase family. Tig subfamily.

The protein localises to the cytoplasm. The enzyme catalyses [protein]-peptidylproline (omega=180) = [protein]-peptidylproline (omega=0). In terms of biological role, involved in protein export. Acts as a chaperone by maintaining the newly synthesized protein in an open conformation. Functions as a peptidyl-prolyl cis-trans isomerase. The polypeptide is Trigger factor (Rhodopseudomonas palustris (strain BisA53)).